A 274-amino-acid chain; its full sequence is tRNA-cytidine(32) 2-sulfurtransferase (274 aa).

The PP-loop motif signature appears at 40–45 (SGGKDS). [4Fe-4S] cluster is bound by residues C115, C118, and C206.

It belongs to the TtcA family. As to quaternary structure, homodimer. The cofactor is Mg(2+). It depends on [4Fe-4S] cluster as a cofactor.

It is found in the cytoplasm. It catalyses the reaction cytidine(32) in tRNA + S-sulfanyl-L-cysteinyl-[cysteine desulfurase] + AH2 + ATP = 2-thiocytidine(32) in tRNA + L-cysteinyl-[cysteine desulfurase] + A + AMP + diphosphate + H(+). It functions in the pathway tRNA modification. Functionally, catalyzes the ATP-dependent 2-thiolation of cytidine in position 32 of tRNA, to form 2-thiocytidine (s(2)C32). The sulfur atoms are provided by the cysteine/cysteine desulfurase (IscS) system. The sequence is that of tRNA-cytidine(32) 2-sulfurtransferase from Pseudomonas syringae pv. tomato (strain ATCC BAA-871 / DC3000).